We begin with the raw amino-acid sequence, 361 residues long: Probable dual-specificity RNA methyltransferase RlmN (361 aa).

Residue Glu-91 is the Proton acceptor of the active site. Residues Gln-97–Arg-329 form the Radical SAM core domain. A disulfide bond links Cys-104 and Cys-340. [4Fe-4S] cluster is bound by residues Cys-111, Cys-115, and Cys-118. S-adenosyl-L-methionine contacts are provided by residues Gly-163 to Glu-164, Ser-195, Ser-218 to His-220, and Asn-296. Cys-340 functions as the S-methylcysteine intermediate in the catalytic mechanism.

It belongs to the radical SAM superfamily. RlmN family. Requires [4Fe-4S] cluster as cofactor.

It localises to the cytoplasm. It catalyses the reaction adenosine(2503) in 23S rRNA + 2 reduced [2Fe-2S]-[ferredoxin] + 2 S-adenosyl-L-methionine = 2-methyladenosine(2503) in 23S rRNA + 5'-deoxyadenosine + L-methionine + 2 oxidized [2Fe-2S]-[ferredoxin] + S-adenosyl-L-homocysteine. The catalysed reaction is adenosine(37) in tRNA + 2 reduced [2Fe-2S]-[ferredoxin] + 2 S-adenosyl-L-methionine = 2-methyladenosine(37) in tRNA + 5'-deoxyadenosine + L-methionine + 2 oxidized [2Fe-2S]-[ferredoxin] + S-adenosyl-L-homocysteine. In terms of biological role, specifically methylates position 2 of adenine 2503 in 23S rRNA and position 2 of adenine 37 in tRNAs. The chain is Probable dual-specificity RNA methyltransferase RlmN from Streptococcus pneumoniae serotype 4 (strain ATCC BAA-334 / TIGR4).